Consider the following 231-residue polypeptide: Demethylmenaquinone methyltransferase (231 aa).

S-adenosyl-L-methionine-binding positions include Thr-62, Asp-80, 100–101, and Ser-117; that span reads DA.

It belongs to the class I-like SAM-binding methyltransferase superfamily. MenG/UbiE family.

It catalyses the reaction a 2-demethylmenaquinol + S-adenosyl-L-methionine = a menaquinol + S-adenosyl-L-homocysteine + H(+). Its pathway is quinol/quinone metabolism; menaquinone biosynthesis; menaquinol from 1,4-dihydroxy-2-naphthoate: step 2/2. Methyltransferase required for the conversion of demethylmenaquinol (DMKH2) to menaquinol (MKH2). This Mycobacterium marinum (strain ATCC BAA-535 / M) protein is Demethylmenaquinone methyltransferase.